Here is a 685-residue protein sequence, read N- to C-terminus: DNA ligase (685 aa).

NAD(+) is bound by residues 47–51 (DSEYD), 96–97 (SL), and glutamate 125. Catalysis depends on lysine 127, which acts as the N6-AMP-lysine intermediate. Positions 148, 185, 304, and 328 each coordinate NAD(+). 4 residues coordinate Zn(2+): cysteine 422, cysteine 425, cysteine 440, and cysteine 446. One can recognise a BRCT domain in the interval 605 to 685 (ADAQPLKGQT…ALLALFAANR (81 aa)).

It belongs to the NAD-dependent DNA ligase family. LigA subfamily. Mg(2+) serves as cofactor. It depends on Mn(2+) as a cofactor.

The enzyme catalyses NAD(+) + (deoxyribonucleotide)n-3'-hydroxyl + 5'-phospho-(deoxyribonucleotide)m = (deoxyribonucleotide)n+m + AMP + beta-nicotinamide D-nucleotide.. In terms of biological role, DNA ligase that catalyzes the formation of phosphodiester linkages between 5'-phosphoryl and 3'-hydroxyl groups in double-stranded DNA using NAD as a coenzyme and as the energy source for the reaction. It is essential for DNA replication and repair of damaged DNA. In Shewanella sp. (strain W3-18-1), this protein is DNA ligase.